The chain runs to 187 residues: UPF0301 protein Spro_4027 (187 aa).

It belongs to the UPF0301 (AlgH) family.

The sequence is that of UPF0301 protein Spro_4027 from Serratia proteamaculans (strain 568).